The sequence spans 205 residues: Holliday junction branch migration complex subunit RuvA (205 aa).

Residues 1–64 (MIGKLKGTID…EDQLRLFGFL (64 aa)) are domain I. The segment at 65-143 (SALEREWFRL…AFAGEMSASI (79 aa)) is domain II. The tract at residues 144 to 153 (GLKQELGEGV) is flexible linker. The tract at residues 153-205 (VAAAPVSDAVSALTNLGYSRDQAANAVAAALKNGGEGGDSAKLIRLGLKELAR) is domain III.

Belongs to the RuvA family. Homotetramer. Forms an RuvA(8)-RuvB(12)-Holliday junction (HJ) complex. HJ DNA is sandwiched between 2 RuvA tetramers; dsDNA enters through RuvA and exits via RuvB. An RuvB hexamer assembles on each DNA strand where it exits the tetramer. Each RuvB hexamer is contacted by two RuvA subunits (via domain III) on 2 adjacent RuvB subunits; this complex drives branch migration. In the full resolvosome a probable DNA-RuvA(4)-RuvB(12)-RuvC(2) complex forms which resolves the HJ.

It is found in the cytoplasm. Its function is as follows. The RuvA-RuvB-RuvC complex processes Holliday junction (HJ) DNA during genetic recombination and DNA repair, while the RuvA-RuvB complex plays an important role in the rescue of blocked DNA replication forks via replication fork reversal (RFR). RuvA specifically binds to HJ cruciform DNA, conferring on it an open structure. The RuvB hexamer acts as an ATP-dependent pump, pulling dsDNA into and through the RuvAB complex. HJ branch migration allows RuvC to scan DNA until it finds its consensus sequence, where it cleaves and resolves the cruciform DNA. The chain is Holliday junction branch migration complex subunit RuvA from Sinorhizobium fredii (strain NBRC 101917 / NGR234).